A 264-amino-acid polypeptide reads, in one-letter code: Ribonuclease HII (264 aa).

The region spanning G33 to T224 is the RNase H type-2 domain. 3 residues coordinate a divalent metal cation: D39, E40, and D133. A disordered region spans residues S222 to T264.

It belongs to the RNase HII family. It depends on Mn(2+) as a cofactor. Requires Mg(2+) as cofactor.

Its subcellular location is the cytoplasm. The catalysed reaction is Endonucleolytic cleavage to 5'-phosphomonoester.. In terms of biological role, endonuclease that specifically degrades the RNA of RNA-DNA hybrids. The sequence is that of Ribonuclease HII from Mycobacterium bovis (strain ATCC BAA-935 / AF2122/97).